We begin with the raw amino-acid sequence, 101 residues long: Small ribosomal subunit protein uS14 (101 aa).

It belongs to the universal ribosomal protein uS14 family. In terms of assembly, part of the 30S ribosomal subunit. Contacts proteins S3 and S10.

Its function is as follows. Binds 16S rRNA, required for the assembly of 30S particles and may also be responsible for determining the conformation of the 16S rRNA at the A site. In Burkholderia ambifaria (strain MC40-6), this protein is Small ribosomal subunit protein uS14.